A 150-amino-acid polypeptide reads, in one-letter code: UPF0756 membrane protein plu2726 (150 aa).

Helical transmembrane passes span 8–28 (LLVLLVLAALGIISHNMTVTL), 51–71 (YGLTIGVLILTVGVMAPIASG), 88–108 (LLAIVIGVLVSWLGSRGVSLM), and 123–143 (VLGVALFKGVPVGPLIAAGIL).

This sequence belongs to the UPF0756 family.

It localises to the cell membrane. This is UPF0756 membrane protein plu2726 from Photorhabdus laumondii subsp. laumondii (strain DSM 15139 / CIP 105565 / TT01) (Photorhabdus luminescens subsp. laumondii).